A 120-amino-acid polypeptide reads, in one-letter code: NAD(P)H-quinone oxidoreductase subunit 3, chloroplastic (120 aa).

A run of 3 helical transmembrane segments spans residues 14-34 (LIISSLIPILAFFISGILAPI), 64-84 (MFALVFVVFDVETVFLYPWAM), and 88-108 (ILGVSVFIEALIFVLILIVGL).

It belongs to the complex I subunit 3 family. NDH is composed of at least 16 different subunits, 5 of which are encoded in the nucleus.

The protein localises to the plastid. It is found in the chloroplast thylakoid membrane. The enzyme catalyses a plastoquinone + NADH + (n+1) H(+)(in) = a plastoquinol + NAD(+) + n H(+)(out). It carries out the reaction a plastoquinone + NADPH + (n+1) H(+)(in) = a plastoquinol + NADP(+) + n H(+)(out). Functionally, NDH shuttles electrons from NAD(P)H:plastoquinone, via FMN and iron-sulfur (Fe-S) centers, to quinones in the photosynthetic chain and possibly in a chloroplast respiratory chain. The immediate electron acceptor for the enzyme in this species is believed to be plastoquinone. Couples the redox reaction to proton translocation, and thus conserves the redox energy in a proton gradient. The chain is NAD(P)H-quinone oxidoreductase subunit 3, chloroplastic from Coffea arabica (Arabian coffee).